The primary structure comprises 320 residues: MKNIADIAKIAGVSKSTVSRYLNNGSVSLKTQQKLDEIIRENDYQPNQFAQSLRARRTNMIGAIIPRMNSFAVDETIKGVKTVCDQLNYSLLLNYTNLNIQLEIDALETFYRSKVDGIVFMATEITDQHLEVINKINVPVIIVGQAHDDLHCIIHNDYQAGYLVGDMLGQQGYNDIKFFGVTESDIAVGVQRKEGLIAGLEAHNIQPEISLTSFNYQEAMVDVVEALQAYPHYDAIVGATDSIALAIHKYNSEHKPHAHEKYIVGFGGDPVTDIVSPSIHTINYNFEYAGSVAMDKLNQMIQHQVIEQRIIIDVEQSFEN.

An HTH lacI-type domain is found at 1–55 (MKNIADIAKIAGVSKSTVSRYLNNGSVSLKTQQKLDEIIRENDYQPNQFAQSLRA). The H-T-H motif DNA-binding region spans 4–23 (IADIAKIAGVSKSTVSRYLN).

In terms of biological role, negative regulator of scrB expression. The chain is Sucrose operon repressor (scrR) from Staphylococcus xylosus.